We begin with the raw amino-acid sequence, 646 residues long: Phosphomethylpyrimidine synthase (646 aa).

Substrate contacts are provided by residues Asn-235, Met-264, Tyr-293, His-329, 349-351 (SRG), 390-393 (DGLR), and Glu-429. Zn(2+) is bound at residue His-433. Tyr-456 serves as a coordination point for substrate. His-497 serves as a coordination point for Zn(2+). [4Fe-4S] cluster contacts are provided by Cys-577, Cys-580, and Cys-585.

This sequence belongs to the ThiC family. In terms of assembly, homodimer. Requires [4Fe-4S] cluster as cofactor.

The enzyme catalyses 5-amino-1-(5-phospho-beta-D-ribosyl)imidazole + S-adenosyl-L-methionine = 4-amino-2-methyl-5-(phosphooxymethyl)pyrimidine + CO + 5'-deoxyadenosine + formate + L-methionine + 3 H(+). It participates in cofactor biosynthesis; thiamine diphosphate biosynthesis. Its function is as follows. Catalyzes the synthesis of the hydroxymethylpyrimidine phosphate (HMP-P) moiety of thiamine from aminoimidazole ribotide (AIR) in a radical S-adenosyl-L-methionine (SAM)-dependent reaction. This is Phosphomethylpyrimidine synthase from Vibrio campbellii (strain ATCC BAA-1116).